A 379-amino-acid polypeptide reads, in one-letter code: Pectin lyase B (379 aa).

Residues 1–19 (MRLHAPILSLLAAAASTSA) form the signal peptide. 2 disulfide bridges follow: C82–C101 and C91–C225. N128 is a glycosylation site (N-linked (GlcNAc...) asparagine). R255 is a catalytic residue. C322 and C330 form a disulfide bridge.

Belongs to the polysaccharide lyase 1 family.

The protein localises to the secreted. It carries out the reaction Eliminative cleavage of (1-&gt;4)-alpha-D-galacturonan methyl ester to give oligosaccharides with 4-deoxy-6-O-methyl-alpha-D-galact-4-enuronosyl groups at their non-reducing ends.. In terms of biological role, pectinolytic enzymes consist of four classes of enzymes: pectin lyase, polygalacturonase, pectin methylesterase and rhamnogalacturonase. Among pectinolytic enzymes, pectin lyase is the most important in depolymerization of pectin, since it cleaves internal glycosidic bonds of highly methylated pectins. The chain is Pectin lyase B (pelB) from Emericella nidulans (strain FGSC A4 / ATCC 38163 / CBS 112.46 / NRRL 194 / M139) (Aspergillus nidulans).